The following is a 311-amino-acid chain: 4-hydroxy-tetrahydrodipicolinate synthase (311 aa).

Residue threonine 51 participates in pyruvate binding. Tyrosine 140 serves as the catalytic Proton donor/acceptor. The active-site Schiff-base intermediate with substrate is the lysine 168. Residue isoleucine 209 participates in pyruvate binding.

This sequence belongs to the DapA family. In terms of assembly, homotetramer; dimer of dimers.

It is found in the cytoplasm. The enzyme catalyses L-aspartate 4-semialdehyde + pyruvate = (2S,4S)-4-hydroxy-2,3,4,5-tetrahydrodipicolinate + H2O + H(+). It functions in the pathway amino-acid biosynthesis; L-lysine biosynthesis via DAP pathway; (S)-tetrahydrodipicolinate from L-aspartate: step 3/4. Catalyzes the condensation of (S)-aspartate-beta-semialdehyde [(S)-ASA] and pyruvate to 4-hydroxy-tetrahydrodipicolinate (HTPA). This Streptococcus pneumoniae (strain CGSP14) protein is 4-hydroxy-tetrahydrodipicolinate synthase.